A 434-amino-acid polypeptide reads, in one-letter code: Putative B3 domain-containing protein Os04g0347400 (434 aa).

DNA-binding regions (TF-B3) lie at residues 27–124, 150–246, and 326–432; these read SFHK…FDTT, KPQF…FGIN, and WIKK…DRVE.

Its subcellular location is the nucleus. The sequence is that of Putative B3 domain-containing protein Os04g0347400 from Oryza sativa subsp. japonica (Rice).